A 131-amino-acid polypeptide reads, in one-letter code: Nitrogenase-stabilizing/protective protein NifW (131 aa).

The protein belongs to the NifW family. Homotrimer; associates with NifD.

May protect the nitrogenase Fe-Mo protein from oxidative damage. The sequence is that of Nitrogenase-stabilizing/protective protein NifW from Frankia alni (strain DSM 45986 / CECT 9034 / ACN14a).